The sequence spans 750 residues: Methylmalonyl-CoA mutase, mitochondrial (750 aa).

Residues M1–L32 constitute a mitochondrion transit peptide. Q50 contributes to the malonyl-CoA binding site. The residue at position 89 (K89) is an N6-acetyllysine. Malonyl-CoA is bound by residues Y96–M99 and T106–Y110. K212 carries the post-translational modification N6-acetyllysine. Malonyl-CoA-binding positions include T216 to Q218, R228, K255, H265, and R304 to S306. Position 335 is an N6-acetyllysine (K335). K343 carries the N6-succinyllysine modification. S481 is subject to Phosphoserine. N6-succinyllysine is present on K595. N6-acetyllysine is present on K602. Positions R614 to K746 constitute a B12-binding domain. H627 contacts adenosylcob(III)alamin.

It belongs to the methylmalonyl-CoA mutase family. In terms of assembly, homodimer. Interacts (the apoenzyme form) with MMAA; the interaction is GTP dependent. Adenosylcob(III)alamin is required as a cofactor.

The protein resides in the mitochondrion matrix. The protein localises to the mitochondrion. Its subcellular location is the cytoplasm. It carries out the reaction (R)-methylmalonyl-CoA = succinyl-CoA. Its activity is regulated as follows. During catalysis, accumulation of oxidized inactive cofactor hydroxocobalamin (OH2Cbl) leads to loss of MMUT activity. Interaction with MMAA decreases the rate of OH2Cbl formation and promotes the replacement of OH2Cbl by the active cofactor adenosylcobalamin (AdoCbl), thereby restoring MMUT activity. Inhibited by itaconyl-CoA, a metabolite that inactivates the coenzyme B12 cofactor. Inhibited at high concentration of substrate. In terms of biological role, catalyzes the reversible isomerization of methylmalonyl-CoA (MMCoA) (generated from branched-chain amino acid metabolism and degradation of dietary odd chain fatty acids and cholesterol) to succinyl-CoA (3-carboxypropionyl-CoA), a key intermediate of the tricarboxylic acid cycle. The protein is Methylmalonyl-CoA mutase, mitochondrial of Homo sapiens (Human).